The chain runs to 391 residues: Elongation factor Tu (391 aa).

Residues 10–201 form the tr-type G domain; that stretch reads KPHVNIGTIG…AVDDYIPTPE (192 aa). The interval 19–26 is G1; the sequence is GHVDHGKT. 19 to 26 contacts GTP; the sequence is GHVDHGKT. T26 serves as a coordination point for Mg(2+). The G2 stretch occupies residues 55-59; it reads GITIS. Residues 76–79 are G3; the sequence is DCPG. GTP is bound by residues 76 to 80 and 131 to 134; these read DCPGH and NKVD. The tract at residues 131–134 is G4; that stretch reads NKVD. The tract at residues 169 to 171 is G5; the sequence is SAL.

The protein belongs to the TRAFAC class translation factor GTPase superfamily. Classic translation factor GTPase family. EF-Tu/EF-1A subfamily. Monomer.

The protein localises to the cytoplasm. It carries out the reaction GTP + H2O = GDP + phosphate + H(+). Functionally, GTP hydrolase that promotes the GTP-dependent binding of aminoacyl-tRNA to the A-site of ribosomes during protein biosynthesis. The sequence is that of Elongation factor Tu from Paracoccus denitrificans (strain Pd 1222).